The following is a 120-amino-acid chain: Large ribosomal subunit protein bL19 (120 aa).

The protein belongs to the bacterial ribosomal protein bL19 family.

This protein is located at the 30S-50S ribosomal subunit interface and may play a role in the structure and function of the aminoacyl-tRNA binding site. The sequence is that of Large ribosomal subunit protein bL19 from Rippkaea orientalis (strain PCC 8801 / RF-1) (Cyanothece sp. (strain PCC 8801)).